The sequence spans 349 residues: Phosphoribosylformylglycinamidine cyclo-ligase (349 aa).

It belongs to the AIR synthase family.

The protein localises to the cytoplasm. The enzyme catalyses 2-formamido-N(1)-(5-O-phospho-beta-D-ribosyl)acetamidine + ATP = 5-amino-1-(5-phospho-beta-D-ribosyl)imidazole + ADP + phosphate + H(+). It participates in purine metabolism; IMP biosynthesis via de novo pathway; 5-amino-1-(5-phospho-D-ribosyl)imidazole from N(2)-formyl-N(1)-(5-phospho-D-ribosyl)glycinamide: step 2/2. The sequence is that of Phosphoribosylformylglycinamidine cyclo-ligase from Methanococcus maripaludis (strain C6 / ATCC BAA-1332).